The sequence spans 126 residues: Fluoride-specific ion channel FluC 2 (126 aa).

4 helical membrane-spanning segments follow: residues 11 to 31 (IFLI…LCEL), 34 to 54 (GQLG…MIMY), 66 to 86 (GKIA…TFAV), and 93 to 113 (FIPA…GVFF). Na(+) is bound by residues G76 and T79.

The protein belongs to the fluoride channel Fluc/FEX (TC 1.A.43) family.

It localises to the cell membrane. The catalysed reaction is fluoride(in) = fluoride(out). With respect to regulation, na(+) is not transported, but it plays an essential structural role and its presence is essential for fluoride channel function. Fluoride-specific ion channel. Important for reducing fluoride concentration in the cell, thus reducing its toxicity. The chain is Fluoride-specific ion channel FluC 2 from Methanosarcina acetivorans (strain ATCC 35395 / DSM 2834 / JCM 12185 / C2A).